The sequence spans 233 residues: Lectin (233 aa).

2 N-linked (GlcNAc...) asparagine glycosylation sites follow: N26 and N108. Mn(2+)-binding residues include E118 and D120. Ca(2+) contacts are provided by D120, W122, N124, and E129. The Mn(2+) site is built by E129 and H134.

Belongs to the leguminous lectin family. In terms of assembly, monomer.

Its subcellular location is the secreted. Functionally, has metal-independent hemagglutinating activity towards erythrocytes from rabbit and human. Hemagglutinating activity is inhibited by glycoproteins fetuin, asialo-fetuin, thyroglobulin and azocasein but not by free carbohydrates. Inhibits ADP- and epinephrin-induced but not collagen-, fibrinogen, thrombin- or arachidonic acid-induced platelet aggregation in vitro. Has anticoagulant activity in vitro. This Bauhinia forficata (Brazilian orchid-tree) protein is Lectin.